Here is a 40-residue protein sequence, read N- to C-terminus: Neutral phospholipase A2 homolog cannitoxin beta chain 2 (40 aa).

In terms of assembly, heterotrimer of alpha, beta, and gamma chains; non-covalently linked. Expressed by the venom gland.

Its subcellular location is the secreted. Functionally, heterotrimer: Snake venom phospholipase A2 (PLA2) heterotrimer that acts as a potent presynaptic neurotoxin by blocking synaptic transmission and synaptic vesicle recycling. Enzymatic activity is essential for the neurotoxic effects. May act by binding in a calcium-dependent fashion to neurotonal pentraxin-1 (NPTX1) and neurotonal pentraxin-2 (NPTX2), but not to neuronal pentraxin receptor (NPTXR). Also binds to taipoxin-associated calcium binding protein 49 (RCN2), a protein localized in the lumen of endoplasmic reticulum. Its function is as follows. Monomer (beta chain): Snake venom phospholipase A2 homolog that is neither toxic nor enzymatically active. Does not bind calcium. This is Neutral phospholipase A2 homolog cannitoxin beta chain 2 from Oxyuranus scutellatus canni (Papuan taipan).